A 77-amino-acid chain; its full sequence is Small nuclear ribonucleoprotein G (77 aa).

One can recognise a Sm domain in the interval 2–77; that stretch reads VSTPELKKYM…IISLEALDAI (76 aa).

The protein belongs to the snRNP Sm proteins family. Component of the Sm core complex, present in spliceosomal snRNP U1, U2, U4/U6 and U5. The core complex contains SMB1, SMD1, SMD2, SMD3, SME1, SMX3 and SMX2 (Sm proteins B, D1, D2, D3, E, F and G, respectively), and is probably a heptameric ring structure. SMX2 specifically interacts with SME1. Belongs to the CWC complex (or CEF1-associated complex), a spliceosome sub-complex reminiscent of a late-stage spliceosome composed of the U2, U5 and U6 snRNAs and at least BUD13, BUD31, BRR2, CDC40, CEF1, CLF1, CUS1, CWC2, CWC15, CWC21, CWC22, CWC23, CWC24, CWC25, CWC27, ECM2, HSH155, IST3, ISY1, LEA1, MSL1, NTC20, PRP8, PRP9, PRP11, PRP19, PRP21, PRP22, PRP45, PRP46, SLU7, SMB1, SMD1, SMD2, SMD3, SMX2, SMX3, SNT309, SNU114, SPP2, SYF1, SYF2, RSE1 and YJU2. Component of the U4/U6-U5 tri-snRNP complex composed of the U4, U6 and U5 snRNAs and at least PRP3, PRP4, PRP6, PRP8, PRP18, PRP31, PRP38, SNU13, SNU23, SNU66, SNU114, SPP381, SMB1, SMD1, SMD2, SMD3, SMX2, SMX3, LSM2, LSM3, LSM4, LSM5, LSM6, LSM7, LSM8, BRR2 and DIB1.

It is found in the nucleus. It localises to the cytoplasm. Plays a role in pre-mRNA splicing as a core component of the spliceosomal U1, U2, U4 and U5 small nuclear ribonucleoproteins (snRNPs), the building blocks of the spliceosome. In Saccharomyces cerevisiae (strain ATCC 204508 / S288c) (Baker's yeast), this protein is Small nuclear ribonucleoprotein G (SMX2).